We begin with the raw amino-acid sequence, 110 residues long: Mobility group protein 1B (110 aa).

A DNA-binding region (HMG box) is located at residues 5–71 (PKRPLSAYML…NYIRALQEYE (67 aa)). Basic and acidic residues predominate over residues 71-81 (ERNGGGGDDKG). Residues 71–110 (ERNGGGGDDKGKKRKGAAPKKGAGKKSKKGAHSDDDGDSE) form a disordered region. Over residues 82 to 100 (KKRKGAAPKKGAGKKSKKG) the composition is skewed to basic residues.

It belongs to the HMGB family.

It localises to the nucleus. The protein localises to the chromosome. Found in condensed chromomeres. Binds preferentially to AT-rich DNA. This chain is Mobility group protein 1B (HMG1B), found in Chironomus tentans (Midge).